The sequence spans 383 residues: MILSPADQERIETFWNYCLKHQYFNIGYPESADFDYSALFRFFKFSINNCGDWKDYSNYALNSFDFEKDVMAYFAEIFQIPFEESWGYVTNGGTEGNMFGCYLARELFSDSTLYYSKDTHYSVGKIAKLLQMKSCVIESLDNGEIDYDDLIHKIKTNKESHPIIFANIGTTMTGAIDDIEMIQERLAQIGIMRRDYYIHADAALSGMILPFVDHPQAFSFAHGIDSICVSGHKMIGSPIPCGIVVAKRQNVERISVDVDYISTRDQTISGSRNGHTVLLMWAAIRSQTNLQRRQRIQHCLKMAQYAVDRFQAVGIPAWRNPNSITVVFPCPSEHIWKKHYLATSGNMAHLITTAHHRDTRQIDSLIDDVIFDLQGASKRTVGF.

Residue His120 coordinates substrate. Lys233 carries the N6-(pyridoxal phosphate)lysine modification.

The protein belongs to the group II decarboxylase family. In terms of assembly, homotetramer. Requires pyridoxal 5'-phosphate as cofactor.

The catalysed reaction is L-histidine + H(+) = histamine + CO2. This chain is Histidine decarboxylase, found in Acinetobacter baumannii (strain AB307-0294).